Reading from the N-terminus, the 230-residue chain is Uracil-DNA glycosylase (230 aa).

Asp-70 serves as the catalytic Proton acceptor.

This sequence belongs to the uracil-DNA glycosylase (UDG) superfamily. UNG family.

The protein resides in the cytoplasm. It catalyses the reaction Hydrolyzes single-stranded DNA or mismatched double-stranded DNA and polynucleotides, releasing free uracil.. Excises uracil residues from the DNA which can arise as a result of misincorporation of dUMP residues by DNA polymerase or due to deamination of cytosine. The polypeptide is Uracil-DNA glycosylase (Pseudomonas syringae pv. syringae (strain B728a)).